Here is a 5147-residue protein sequence, read N- to C-terminus: Cadherin-related tumor suppressor (5147 aa).

The N-terminal stretch at 1 to 35 (MERLLLLFFLLLAGRESLCQTGDTKLELLAPRGRS) is a signal peptide. Cadherin domains lie at 36–156 (YATT…SPEF), 157–270 (PEPS…PPIF), 271–382 (DHSD…DPII), 383–494 (SFRF…EPVF), 495–599 (EKSE…APQF), 600–708 (SQRE…DPQF), 709–820 (YPRH…LEML), 821–942 (ECGQ…APVF), 943–1049 (ALDR…TPVF), 1050–1153 (DHTS…APQF), 1154–1278 (TNST…APEF), 1279–1384 (LRAP…APEF), 1385–1489 (TQSS…PPIF), 1490–1601 (PSTA…APVF), 1602–1713 (VSMN…VPQF), 1714–1823 (EQRS…PPQF), 1824–1922 (LDTP…PPLF), 1923–2027 (EDTV…APIF), 2028–2167 (DPMS…VPVF), 2168–2278 (ISAN…SPVF), 2279–2385 (DPKQ…PTFL), 2386–2491 (DSPY…DPVF), 2492–2596 (ELQS…IPKF), 2597–2703 (DSTT…FPTF), 2704–2810 (AYMA…APVM), 2811–2913 (EQLI…PPKF), 2914–3013 (TRLF…APEF), 3014–3124 (EHSF…PPKF), 3125–3229 (EQAE…TPRF), 3230–3334 (SVNS…PPVF), 3335–3439 (NHKE…YPQF), 3440–3545 (LQPV…PPEF), 3546–3651 (IKHY…GPTF), and 3652–3756 (TPEG…NPST). Residues 36–4583 (YATTYEQYAA…GQDAAQVADP (4548 aa)) are Extracellular-facing. N-linked (GlcNAc...) asparagine glycans are attached at residues Asn239, Asn257, Asn276, Asn280, Asn402, and Asn461. Asn605 and Asn631 each carry an N-linked (GlcNAc...) asparagine glycan. Asn1155, Asn1367, and Asn1458 each carry an N-linked (GlcNAc...) asparagine glycan. Asn1751, Asn1831, and Asn1880 each carry an N-linked (GlcNAc...) asparagine glycan. 6 N-linked (GlcNAc...) asparagine glycosylation sites follow: Asn2080, Asn2171, Asn2247, Asn2290, Asn2437, and Asn2581. An N-linked (GlcNAc...) asparagine glycan is attached at Asn2799. Residues Asn2920, Asn2946, and Asn2967 are each glycosylated (N-linked (GlcNAc...) asparagine). 5 N-linked (GlcNAc...) asparagine glycosylation sites follow: Asn3167, Asn3303, Asn3386, Asn3389, and Asn3525. 3 N-linked (GlcNAc...) asparagine glycosylation sites follow: Asn3852, Asn3865, and Asn3905. 4 consecutive EGF-like domains span residues 3950-4011 (GYEP…EQCS), 4013-4049 (RQDPCLPNPCHSQVQCRRLGSDFQCMCPANRDGKHCE), 4052-4090 (RSDVCYSKPCRNGGSCQRSPDGSSYFCLCRPGFRGNQCE), and 4092-4128 (VSDSCRPNPCLHGGLCVSLKPGYKCNCTPGRYGRHCE). Intrachain disulfides connect Cys3954–Cys3966, Cys3960–Cys3999, Cys4001–Cys4010, Cys4017–Cys4028, Cys4022–Cys4037, Cys4039–Cys4048, Cys4056–Cys4067, Cys4061–Cys4078, Cys4080–Cys4089, Cys4096–Cys4107, Cys4101–Cys4116, Cys4118–Cys4127, Cys4294–Cys4320, Cys4325–Cys4341, Cys4334–Cys4350, and Cys4352–Cys4361. The Laminin G-like 1 domain maps to 4129–4320 (RFSYGFQPLS…LQQKGILAGC (192 aa)). An N-linked (GlcNAc...) asparagine glycan is attached at Asn4306. The EGF-like 5 domain maps to 4321 to 4362 (NRQACQPALAAERCGGFAGQCIDRWSSSLCQCGGHLQSPDCS). The Laminin G-like 2 domain occupies 4402–4569 (DNQQMRERRA…RYHGKIESGC (168 aa)). Residues Asn4414, Asn4471, Asn4487, Asn4539, and Asn4550 are each glycosylated (N-linked (GlcNAc...) asparagine). A disulfide bond links Cys4536 and Cys4569. The chain crosses the membrane as a helical span at residues 4584-4609 (LSIGFTLVIVFFVILVVAILGSYVIY). The Cytoplasmic segment spans residues 4610 to 5147 (RFRGKQEKIG…NGPAAPEEYV (538 aa)). An essential for stability of mitochondrial electron chain complexes I and V, and promotes interaction with ND-24 region spans residues 4744-4771 (PEHYDLENASSIAPSDIDIVYHYKGYRE). Disordered regions lie at residues 4787–4850 (AYTH…SQQP), 4871–4921 (TSSS…QTSM), and 4967–5041 (GDVD…PIPP). The span at 4826–4835 (SASRTHQSTP) shows a compositional bias: polar residues. Composition is skewed to low complexity over residues 4838 to 4850 (RLSPSSELSSQQP) and 4891 to 4918 (SPVMSQLSGQSSSASRQKPGVPQQQAQQ). At Ser4843 the chain carries Phosphoserine. Positions 4972-5008 (HSSTSTDESGNDSFTCSEIEYDNNSLSGDGKYSTSKS) are enriched in polar residues. Phosphoserine occurs at positions 5054 and 5061. Residues 5113 to 5147 (PDTNGPSQQQQQQTQVVSTLRMPSSNGPAAPEEYV) are disordered. Positions 5119–5131 (SQQQQQQTQVVST) are enriched in low complexity.

Interacts with Fbxl7. Ft-mito interacts with NADH dehydrogenase subunit ND-24 and with ATP synthase subunit ATPsynC. In terms of processing, phosphorylated by fj on Ser/Thr of cadherin domains. Phosphorylation by fj enhances binding to ds. Phosphorylated in the cytoplasmic domain in a dco-dependent manner which is promoted by ds. Proteolytically cleaved to yield stably associated N- and C-terminal fragments. The C-terminal fragment is processed further to release a 68 kDa mitochondrial fragment, Ft-mito.

The protein localises to the cell membrane. It is found in the apical cell membrane. The protein resides in the mitochondrion. Its function is as follows. Involved in regulation of planar cell polarity in the compound eye where it is required for correct specification of the R3 and R4 photoreceptor cells by regulating Fz activity in the R3/R4 precursor cells. This is likely to occur through creation of an ft gradient so that the equatorial R3/R4 precursor cell has a higher level of ft function than its polar neighbor. Also required for planar cell polarity of wing hairs. Mediates heterophilic cell adhesion in vitro and is required to stabilize ds on the cell surface. Involved in regulation of eye imaginal disk size. Upstream component of the Hippo pathway where it is likely to act as a cell surface receptor involved in regulation of tissue size and is required for the localization and stability of ex. Probably acts as a cell surface receptor for ds. In terms of biological role, regulates mitochondrial electron transport chain integrity and promotes oxidative phosphorylation. This is Cadherin-related tumor suppressor from Drosophila melanogaster (Fruit fly).